A 427-amino-acid chain; its full sequence is Light-independent protochlorophyllide reductase subunit N (427 aa).

3 residues coordinate [4Fe-4S] cluster: Cys29, Cys54, and Cys115.

It belongs to the BchN/ChlN family. Protochlorophyllide reductase is composed of three subunits; BchL, BchN and BchB. Forms a heterotetramer of two BchB and two BchN subunits. [4Fe-4S] cluster serves as cofactor.

It catalyses the reaction chlorophyllide a + oxidized 2[4Fe-4S]-[ferredoxin] + 2 ADP + 2 phosphate = protochlorophyllide a + reduced 2[4Fe-4S]-[ferredoxin] + 2 ATP + 2 H2O. The protein operates within porphyrin-containing compound metabolism; bacteriochlorophyll biosynthesis (light-independent). In terms of biological role, component of the dark-operative protochlorophyllide reductase (DPOR) that uses Mg-ATP and reduced ferredoxin to reduce ring D of protochlorophyllide (Pchlide) to form chlorophyllide a (Chlide). This reaction is light-independent. The NB-protein (BchN-BchB) is the catalytic component of the complex. This Bradyrhizobium sp. (strain ORS 278) protein is Light-independent protochlorophyllide reductase subunit N.